Here is a 153-residue protein sequence, read N- to C-terminus: Bacteriohemerythrin (153 aa).

Fe cation-binding residues include His21, His57, Glu61, His76, His80, His115, and Asp120.

Belongs to the hemerythrin family. Monomer.

Oxygen-binding protein. May be involved in a storage mechanism or for delivery to oxygen-requiring enzymes. The oxygen-binding site contains two iron atoms. The protein is Bacteriohemerythrin of Pseudomonas aeruginosa (strain UCBPP-PA14).